The sequence spans 450 residues: UDP-N-acetylmuramoylalanine--D-glutamate ligase (450 aa).

Residue 111 to 117 (GTNGKST) participates in ATP binding.

The protein belongs to the MurCDEF family.

The protein localises to the cytoplasm. It catalyses the reaction UDP-N-acetyl-alpha-D-muramoyl-L-alanine + D-glutamate + ATP = UDP-N-acetyl-alpha-D-muramoyl-L-alanyl-D-glutamate + ADP + phosphate + H(+). It functions in the pathway cell wall biogenesis; peptidoglycan biosynthesis. Cell wall formation. Catalyzes the addition of glutamate to the nucleotide precursor UDP-N-acetylmuramoyl-L-alanine (UMA). This chain is UDP-N-acetylmuramoylalanine--D-glutamate ligase, found in Rickettsia bellii (strain RML369-C).